We begin with the raw amino-acid sequence, 986 residues long: Isoleucine--tRNA ligase (986 aa).

The 'KMSKS' region motif lies at 534–538; the sequence is EMHKS. An ATP-binding site is contributed by Lys537.

This sequence belongs to the class-I aminoacyl-tRNA synthetase family. IleS type 2 subfamily. In terms of assembly, monomer. Zn(2+) serves as cofactor.

Its subcellular location is the cytoplasm. The enzyme catalyses tRNA(Ile) + L-isoleucine + ATP = L-isoleucyl-tRNA(Ile) + AMP + diphosphate. Functionally, catalyzes the attachment of isoleucine to tRNA(Ile). As IleRS can inadvertently accommodate and process structurally similar amino acids such as valine, to avoid such errors it has two additional distinct tRNA(Ile)-dependent editing activities. One activity is designated as 'pretransfer' editing and involves the hydrolysis of activated Val-AMP. The other activity is designated 'posttransfer' editing and involves deacylation of mischarged Val-tRNA(Ile). This Saccharolobus solfataricus (strain ATCC 35092 / DSM 1617 / JCM 11322 / P2) (Sulfolobus solfataricus) protein is Isoleucine--tRNA ligase (ileS).